Reading from the N-terminus, the 464-residue chain is Potassium/proton antiporter CemA (464 aa).

A run of 5 helical transmembrane segments spans residues 36 to 56 (FSLS…TEIL), 241 to 261 (ASVS…QIAI), 341 to 361 (LLLR…LLIF), 389 to 409 (ILLL…EILV), and 425 to 445 (TPCF…YWIF).

This sequence belongs to the CemA family.

It localises to the plastid. It is found in the chloroplast inner membrane. The enzyme catalyses K(+)(in) + H(+)(out) = K(+)(out) + H(+)(in). In terms of biological role, contributes to K(+)/H(+) antiport activity by supporting proton efflux to control proton extrusion and homeostasis in chloroplasts in a light-dependent manner to modulate photosynthesis. Prevents excessive induction of non-photochemical quenching (NPQ) under continuous-light conditions. Indirectly promotes efficient inorganic carbon uptake into chloroplasts. This chain is Potassium/proton antiporter CemA, found in Adiantum capillus-veneris (Maidenhair fern).